The chain runs to 358 residues: UPF0421 protein BT9727_2513 (358 aa).

Transmembrane regions (helical) follow at residues Ile19–Val39, Phe74–Val94, Thr109–Ile129, and Leu131–Pro151.

The protein belongs to the UPF0421 family.

The protein localises to the cell membrane. The chain is UPF0421 protein BT9727_2513 from Bacillus thuringiensis subsp. konkukian (strain 97-27).